Reading from the N-terminus, the 434-residue chain is MHVIVLGSGVIGTTTAYYLARQGAQVTVLERRAGPADETSYGNAGQVSPGYSTPWAAPGIPLKALKWMFQKHAPLAIRADGSFYQWRWLAAMLANCSAGRYSVNKERMLRLAEYSRDCLRTLRADTGIQYEQRTQGTLQLFRTAAQMEAARRDIAVLEECGVPYELLDRNRLPTAEPALARALDKLAGGLRLPNDETGDCRRFTLQLADKAKALGVQFRFNQQVEGLDVRGGQVAGVRVGGEQLAADRYVAAFGSYTRGFLRPLGLDLPVYPVKGYSLTIPMTDESAAPVSTILDETYKVAVTRFDQRIRVGGMAELAGFDLRLKEARRKTLELVVNDLFPGSGAVEQAEFWTGLRPMTPDSTPIIGATKYGNLFLNTGHGTLGWTMACGSGQLVADQVCGRQPAIRADDLALSRYGAGGQAGGGVARAQHNAA.

3-17 (VIVLGSGVIGTTTAY) is an FAD binding site.

The protein belongs to the DadA oxidoreductase family. It depends on FAD as a cofactor.

The catalysed reaction is a D-alpha-amino acid + A + H2O = a 2-oxocarboxylate + AH2 + NH4(+). Functionally, oxidative deamination of D-amino acids. The chain is D-amino acid dehydrogenase from Bordetella bronchiseptica (strain ATCC BAA-588 / NCTC 13252 / RB50) (Alcaligenes bronchisepticus).